A 120-amino-acid polypeptide reads, in one-letter code: Aspartate 1-decarboxylase (120 aa).

S25 acts as the Schiff-base intermediate with substrate; via pyruvic acid in catalysis. At S25 the chain carries Pyruvic acid (Ser). T57 serves as a coordination point for substrate. Y58 acts as the Proton donor in catalysis. 73–75 (GAA) provides a ligand contact to substrate.

This sequence belongs to the PanD family. Heterooctamer of four alpha and four beta subunits. The cofactor is pyruvate. Is synthesized initially as an inactive proenzyme, which is activated by self-cleavage at a specific serine bond to produce a beta-subunit with a hydroxyl group at its C-terminus and an alpha-subunit with a pyruvoyl group at its N-terminus.

It is found in the cytoplasm. The enzyme catalyses L-aspartate + H(+) = beta-alanine + CO2. Its pathway is cofactor biosynthesis; (R)-pantothenate biosynthesis; beta-alanine from L-aspartate: step 1/1. Catalyzes the pyruvoyl-dependent decarboxylation of aspartate to produce beta-alanine. This is Aspartate 1-decarboxylase from Deinococcus radiodurans (strain ATCC 13939 / DSM 20539 / JCM 16871 / CCUG 27074 / LMG 4051 / NBRC 15346 / NCIMB 9279 / VKM B-1422 / R1).